The sequence spans 260 residues: Indole-3-glycerol phosphate synthase (260 aa).

Belongs to the TrpC family.

It catalyses the reaction 1-(2-carboxyphenylamino)-1-deoxy-D-ribulose 5-phosphate + H(+) = (1S,2R)-1-C-(indol-3-yl)glycerol 3-phosphate + CO2 + H2O. Its pathway is amino-acid biosynthesis; L-tryptophan biosynthesis; L-tryptophan from chorismate: step 4/5. The polypeptide is Indole-3-glycerol phosphate synthase (Staphylococcus aureus (strain Mu3 / ATCC 700698)).